Here is a 298-residue protein sequence, read N- to C-terminus: MPKLLVIFNIIYPLQSLKKDTFNFWWSFQKWKYNKTMSGLRQVLDGKIAIITGGASGIGAEAVRLFTDHGAKVVIVDIQEELGQNLAVSIGLDKASFYRCNVTDETDVENAVKFTVEKHGKLDVLFSNAGVLEAFGSVLDLDLEAFDRTMAVNVRGAAAFIKHAARSMVASGTRGSIVCTTSIAAEIGGPGPHSYTASKHALLGLIRSACAGLGQYGIRVNGVAPYGVATGMTSAYNEEAVKMLEEYGEALGNLKGVVLKARHIAEAALFLASDDSVYISGQNLVVDGGFSVVKLMTT.

50-74 (IITGGASGIGAEAVRLFTDHGAKVV) provides a ligand contact to NAD(+). Ser182 lines the substrate pocket. Tyr195 (proton acceptor) is an active-site residue.

This sequence belongs to the short-chain dehydrogenases/reductases (SDR) family.

The protein is Short-chain dehydrogenase reductase 4 (SDR4) of Arabidopsis thaliana (Mouse-ear cress).